A 187-amino-acid polypeptide reads, in one-letter code: Ribosome-recycling factor (187 aa).

This sequence belongs to the RRF family.

It localises to the cytoplasm. Responsible for the release of ribosomes from messenger RNA at the termination of protein biosynthesis. May increase the efficiency of translation by recycling ribosomes from one round of translation to another. In Paracoccus denitrificans (strain Pd 1222), this protein is Ribosome-recycling factor.